We begin with the raw amino-acid sequence, 228 residues long: MDQNALKALVGQEAVKYVEDGMILGIGTGSTVRYMIDALGERVKNEGLHIIGVATSDRSAKQAESLGITIKELDEVDHLDLTIDGADEIDDNFQGIKGGGAAHLWEKIVAINSTKNMWIVDESKMVHHLGAFPLPLEVIPFGSSHVLEKLNKMGFNPSFRMTDTGEHVLTDSKNYIIDLHLGRIDHPHDLANTLNGIVGVVEHGLFLDTVNTVIVGRQDGPEVLNARD.

Residues 28-31 (TGST), 84-87 (DGAD), and 97-100 (KGGG) each bind substrate. E106 acts as the Proton acceptor in catalysis. K124 provides a ligand contact to substrate.

The protein belongs to the ribose 5-phosphate isomerase family. In terms of assembly, homodimer.

The enzyme catalyses aldehydo-D-ribose 5-phosphate = D-ribulose 5-phosphate. It functions in the pathway carbohydrate degradation; pentose phosphate pathway; D-ribose 5-phosphate from D-ribulose 5-phosphate (non-oxidative stage): step 1/1. In terms of biological role, catalyzes the reversible conversion of ribose-5-phosphate to ribulose 5-phosphate. This chain is Ribose-5-phosphate isomerase A, found in Levilactobacillus brevis (strain ATCC 367 / BCRC 12310 / CIP 105137 / JCM 1170 / LMG 11437 / NCIMB 947 / NCTC 947) (Lactobacillus brevis).